Consider the following 337-residue polypeptide: GTPase Obg (337 aa).

Positions Met-1–Met-159 constitute an Obg domain. Residues Ala-160 to Ser-322 enclose the OBG-type G domain. GTP-binding positions include Gly-166–Ser-173, Phe-191–Val-195, Asp-213–Gly-216, Thr-280–Asp-283, and Ser-303–Val-305. Residues Ser-173 and Thr-193 each coordinate Mg(2+).

Belongs to the TRAFAC class OBG-HflX-like GTPase superfamily. OBG GTPase family. In terms of assembly, monomer. Mg(2+) serves as cofactor.

The protein localises to the cytoplasm. An essential GTPase which binds GTP, GDP and possibly (p)ppGpp with moderate affinity, with high nucleotide exchange rates and a fairly low GTP hydrolysis rate. Plays a role in control of the cell cycle, stress response, ribosome biogenesis and in those bacteria that undergo differentiation, in morphogenesis control. This chain is GTPase Obg, found in Chlorobium phaeobacteroides (strain DSM 266 / SMG 266 / 2430).